The chain runs to 279 residues: NADPH-dependent 7-cyano-7-deazaguanine reductase (279 aa).

Isoleucine 86–serine 88 contacts substrate. Serine 88–lysine 89 lines the NADPH pocket. The active-site Thioimide intermediate is cysteine 187. The active-site Proton donor is aspartate 194. Histidine 226–glutamate 227 contributes to the substrate binding site. Arginine 255 to glycine 256 is an NADPH binding site.

Belongs to the GTP cyclohydrolase I family. QueF type 2 subfamily. In terms of assembly, homodimer.

It localises to the cytoplasm. It catalyses the reaction 7-aminomethyl-7-carbaguanine + 2 NADP(+) = 7-cyano-7-deazaguanine + 2 NADPH + 3 H(+). It functions in the pathway tRNA modification; tRNA-queuosine biosynthesis. Functionally, catalyzes the NADPH-dependent reduction of 7-cyano-7-deazaguanine (preQ0) to 7-aminomethyl-7-deazaguanine (preQ1). The protein is NADPH-dependent 7-cyano-7-deazaguanine reductase of Haemophilus influenzae (strain PittEE).